The following is an 807-amino-acid chain: MDYGGGFEDHELREAQREYLDFLDDDQDQGLYHGKVRDMIGSNEHRLIVNLNDVRRKNDKRANLMLNDAFAETIAFQRALKDLVASIDATYAKQFEEFSVGFEGSFGSKHVSPRTLTASLLGSLVCVEGIVTKCSLVRPKVMRSVHYCPATKKTLERKYSDLTSLEAFPSSSIYPTKDEENNPLETEYGLSTYKDHQTLSIQEMPEKAPAGQLPRSVDIIADDDLVDKCKPGDRVQIVGIYRCLPSKQGGFTSGTFRTILLANNIKLMSKEIAPTFSADDVAKIKKFCKAHSKDIFEHLSKSLAPSIHGHEYIKKAILCMLLGGNEKVLENGTRIRGDINVLLIGDPSVAKSQLLRYVLHTAPRAIPTTGRGSSGVGLTAAVTTDQETGERRLEAGAMVLADRGVVCIDEFDKMSDMDRTAIHEVMEQGRVTIAKAGIQARLNARCSVLAAANPVYGRYDQYRTPMENIGLQDSLLSRFDLLFIVLDKMDADNDQEIADHVLRMHRYRTPGEQDGYALPLGCSVEIFATDDPNASDVTDQELQIYEKHDNLLHGPRKNKSKIVSMQFIRKYIHVAKLIKPVLTSEAADYISQEYAKIRNHDQINNDSARTMPVTARALETMIRLSTAHAKVRMSKTIERQDAETALELVQFAYFKKVLAKEKKKTDKDLHDENLSQDTLSQESVRKSSRRAGKIADSQDDSMDPYSFSEQDSSLNENLSQSLRPQRKKAESQDGKRSLSQNRTKEFKAALLKAFKSSRSQSVAVSQLLELINKGNPEPFERSEVKEALDNMQNDNQVMVSEDVVFLI.

The region spanning I295–L502 is the MCM domain. ATP is bound at residue G345–S352. An Arginine finger motif is present at residues S477–D480. Basic and acidic residues predominate over residues K664–N673. The disordered stretch occupies residues K664–N741. A compositionally biased stretch (polar residues) spans F707–R723. Positions K727–N741 are enriched in basic and acidic residues.

The protein belongs to the MCM family. As to quaternary structure, component of the mcm2-7 complex (RLF-M). The complex forms a toroidal hexameric ring with the proposed subunit order mcm2-mcm6-mcm4-mcm7-mcm3-mcm5. The heterodimer of mmcm3/mcm5 interacts with mcm4, mmcm6, mcm7 and weakly with mcm2. Interacts with mcm7, though this interaction may not be direct, and remains in a complex with mcm7 throughout the cell cycle. Component of the CMG helicase complex, composed of the mcm2-7 complex, the GINS complex and cdc45.

The protein localises to the nucleus. Its subcellular location is the chromosome. The enzyme catalyses ATP + H2O = ADP + phosphate + H(+). Acts as a component of the mcm2-7 complex (mcm complex) which is the putative replicative helicase essential for 'once per cell cycle' DNA replication initiation and elongation in eukaryotic cells. The active ATPase sites in the mcm2-7 ring are formed through the interaction surfaces of two neighboring subunits such that a critical structure of a conserved arginine finger motif is provided in trans relative to the ATP-binding site of the Walker A box of the adjacent subunit. The six ATPase active sites, however, are likely to contribute differentially to the complex helicase activity. The existence of maternal and zygotic forms of mcm3 and mcm6 suggests that specific forms of mcm2-7 complexes may be used during different stages of development. The protein is Maternal DNA replication licensing factor mcm3 (mmcm3) of Xenopus laevis (African clawed frog).